A 177-amino-acid polypeptide reads, in one-letter code: Peptide methionine sulfoxide reductase MsrA (177 aa).

Cys11 is an active-site residue.

This sequence belongs to the MsrA Met sulfoxide reductase family.

The catalysed reaction is L-methionyl-[protein] + [thioredoxin]-disulfide + H2O = L-methionyl-(S)-S-oxide-[protein] + [thioredoxin]-dithiol. It catalyses the reaction [thioredoxin]-disulfide + L-methionine + H2O = L-methionine (S)-S-oxide + [thioredoxin]-dithiol. Its function is as follows. Has an important function as a repair enzyme for proteins that have been inactivated by oxidation. Catalyzes the reversible oxidation-reduction of methionine sulfoxide in proteins to methionine. This is Peptide methionine sulfoxide reductase MsrA from Trichodesmium erythraeum (strain IMS101).